A 262-amino-acid polypeptide reads, in one-letter code: ATP synthase subunit a (262 aa).

A run of 6 helical transmembrane segments spans residues Ala24 to Phe44, Val84 to Leu104, Asp129 to Val149, Pro165 to Ala185, Leu194 to Ala214, and Leu228 to Leu248.

This sequence belongs to the ATPase A chain family. As to quaternary structure, F-type ATPases have 2 components, CF(1) - the catalytic core - and CF(0) - the membrane proton channel. CF(1) has five subunits: alpha(3), beta(3), gamma(1), delta(1), epsilon(1). CF(0) has three main subunits: a(1), b(2) and c(9-12). The alpha and beta chains form an alternating ring which encloses part of the gamma chain. CF(1) is attached to CF(0) by a central stalk formed by the gamma and epsilon chains, while a peripheral stalk is formed by the delta and b chains.

It localises to the cell inner membrane. Key component of the proton channel; it plays a direct role in the translocation of protons across the membrane. The sequence is that of ATP synthase subunit a from Actinobacillus pleuropneumoniae serotype 7 (strain AP76).